A 322-amino-acid chain; its full sequence is Glucokinase (322 aa).

10–15 (GDIGGT) provides a ligand contact to ATP.

Belongs to the bacterial glucokinase family.

It is found in the cytoplasm. The enzyme catalyses D-glucose + ATP = D-glucose 6-phosphate + ADP + H(+). This Hahella chejuensis (strain KCTC 2396) protein is Glucokinase.